The following is a 294-amino-acid chain: 4-hydroxy-tetrahydrodipicolinate synthase (294 aa).

Residue Thr-44 participates in pyruvate binding. Tyr-132 functions as the Proton donor/acceptor in the catalytic mechanism. Residue Lys-160 is the Schiff-base intermediate with substrate of the active site. Val-202 contributes to the pyruvate binding site.

Belongs to the DapA family. Homotetramer; dimer of dimers.

It localises to the cytoplasm. It carries out the reaction L-aspartate 4-semialdehyde + pyruvate = (2S,4S)-4-hydroxy-2,3,4,5-tetrahydrodipicolinate + H2O + H(+). It functions in the pathway amino-acid biosynthesis; L-lysine biosynthesis via DAP pathway; (S)-tetrahydrodipicolinate from L-aspartate: step 3/4. Its function is as follows. Catalyzes the condensation of (S)-aspartate-beta-semialdehyde [(S)-ASA] and pyruvate to 4-hydroxy-tetrahydrodipicolinate (HTPA). The sequence is that of 4-hydroxy-tetrahydrodipicolinate synthase from Leptospira borgpetersenii serovar Hardjo-bovis (strain JB197).